A 452-amino-acid polypeptide reads, in one-letter code: Cell division protein FtsZ (452 aa).

Residues 24–28 (GAGSN), 111–113 (GTG), E142, R146, and D190 each bind GTP.

This sequence belongs to the FtsZ family. In terms of assembly, homodimer. Polymerizes to form a dynamic ring structure in a strictly GTP-dependent manner. Interacts directly with several other division proteins.

It is found in the cytoplasm. Functionally, essential cell division protein that forms a contractile ring structure (Z ring) at the future cell division site. The regulation of the ring assembly controls the timing and the location of cell division. One of the functions of the FtsZ ring is to recruit other cell division proteins to the septum to produce a new cell wall between the dividing cells. Binds GTP and shows GTPase activity. This chain is Cell division protein FtsZ, found in Rickettsia prowazekii (strain Madrid E).